A 955-amino-acid polypeptide reads, in one-letter code: Leucine-rich repeat-containing G-protein coupled receptor 4 (955 aa).

The first 21 residues, 1-21, serve as a signal peptide directing secretion; it reads MGCPGWPLALFALLLASCSGG. The Extracellular portion of the chain corresponds to 22-547; sequence PSGVSSPAPC…LLGSWMIRLT (526 aa). The 34-residue stretch at 26–59 folds into the LRRNT domain; sequence SSPAPCPAPCACDLDGGADCSGKGLVTVPDGLSV. Cystine bridges form between cysteine 31–cysteine 37 and cysteine 35–cysteine 45. LRR repeat units follow at residues 57–81, 83–105, 106–129, 131–153, 155–177, 178–201, 203–225, 226–249, 250–272, and 274–296; these read LSVF…AFKG, PYLE…ALSG, LKEL…SLKG, VSLQ…SFEG, VQLR…PLSN, LPSL…AFSN, SSLV…CFHG, LDNL…IRSL, PNLK…AFVK, and PLLR…AFQN. Residue asparagine 201 is glycosylated (N-linked (GlcNAc...) asparagine). Asparagine 296 and asparagine 316 each carry an N-linked (GlcNAc...) asparagine glycan. LRR repeat units follow at residues 320–343, 345–365, 366–389, 390–413, and 415–437; these read TNNL…FCQE, KMLR…GFEG, CSSL…TFQG, LAAL…AFVT, and KALT…GLHG. An intrachain disulfide couples cysteine 341 to cysteine 366. N-linked (GlcNAc...) asparagine glycosylation is present at asparagine 384. Intrachain disulfides connect cysteine 472-cysteine 525 and cysteine 473-cysteine 478. Residues 548 to 568 traverse the membrane as a helical segment; it reads VWFIFLLALIFNVIVIVTMFA. At 569-578 the chain is on the cytoplasmic side; sequence SCSQLTSSKL. The chain crosses the membrane as a helical span at residues 579 to 599; the sequence is FIGLIAVSNLFMGVYTGTLTV. At 600–623 the chain is on the extracellular side; sequence LDTISWGQFAEFGIWWETGNGCKV. A disulfide bond links cysteine 621 and cysteine 696. Residues 624–644 traverse the membrane as a helical segment; sequence AGFLAIFSSESAIFFLMLAAI. The Cytoplasmic segment spans residues 645-666; that stretch reads ERSLSAKDIIKKEKHQHLRKFQ. Residues 667–687 traverse the membrane as a helical segment; that stretch reads VASLLAVLLAAAAGCLPLFHI. Over 688–706 the chain is Extracellular; the sequence is GEFSSSPLCLPFPTGETPS. Residues 707 to 727 traverse the membrane as a helical segment; the sequence is LGFTVTLVLLNSLAFLIMVIT. Residues 728-759 lie on the Cytoplasmic side of the membrane; it reads YTKLYCTIEKEDLSENAESSMIKHVAWLIFTN. A helical transmembrane segment spans residues 760–780; the sequence is CIFFCPVAFFSFAPLITAIYI. Residues 781–786 are Extracellular-facing; that stretch reads SPEIMK. A helical membrane pass occupies residues 787-807; that stretch reads SVTLIFLPLPACLNPVLYVFF. Residues 808 to 955 lie on the Cytoplasmic side of the membrane; it reads NPKFKEDWKL…YAYNIPRMKD (148 aa).

The protein belongs to the G-protein coupled receptor 1 family.

Its subcellular location is the cell membrane. Receptor for R-spondins that potentiates the canonical Wnt signaling pathway and is involved in the formation of various organs. Upon binding to R-spondins (RSPO1, RSPO2, RSPO3 or RSPO4), associates with phosphorylated LRP6 and frizzled receptors that are activated by extracellular Wnt receptors, triggering the canonical Wnt signaling pathway to increase expression of target genes. In contrast to classical G-protein coupled receptors, does not activate heterotrimeric G-proteins to transduce the signal. Its function as activator of the Wnt signaling pathway is required for the development of various organs, including liver, kidney, intestine, bone, reproductive tract and eye. May play a role in regulating the circadian rhythms of plasma lipids. Required for proper development of GnRH neurons (gonadotropin-releasing hormone expressing neurons) that control the release of reproductive hormones from the pituitary gland. This is Leucine-rich repeat-containing G-protein coupled receptor 4 (lgr4) from Xenopus tropicalis (Western clawed frog).